The primary structure comprises 441 residues: Signal recognition particle 54 kDa protein (441 aa).

GTP contacts are provided by residues 104–111 (GLQGSGKT), 186–190 (DTAGR), and 244–247 (TKLD).

This sequence belongs to the GTP-binding SRP family. SRP54 subfamily. As to quaternary structure, part of the signal recognition particle protein translocation system, which is composed of SRP and FtsY. Archaeal SRP consists of a 7S RNA molecule of 300 nucleotides and two protein subunits: SRP54 and SRP19.

It is found in the cytoplasm. It carries out the reaction GTP + H2O = GDP + phosphate + H(+). Its function is as follows. Involved in targeting and insertion of nascent membrane proteins into the cytoplasmic membrane. Binds to the hydrophobic signal sequence of the ribosome-nascent chain (RNC) as it emerges from the ribosomes. The SRP-RNC complex is then targeted to the cytoplasmic membrane where it interacts with the SRP receptor FtsY. This chain is Signal recognition particle 54 kDa protein, found in Staphylothermus marinus (strain ATCC 43588 / DSM 3639 / JCM 9404 / F1).